A 142-amino-acid chain; its full sequence is Putative pre-16S rRNA nuclease (142 aa).

Belongs to the YqgF nuclease family.

The protein localises to the cytoplasm. Could be a nuclease involved in processing of the 5'-end of pre-16S rRNA. This is Putative pre-16S rRNA nuclease from Chloroflexus aggregans (strain MD-66 / DSM 9485).